A 250-amino-acid polypeptide reads, in one-letter code: Probable transcriptional regulatory protein DP2908 (250 aa).

It belongs to the TACO1 family.

The protein localises to the cytoplasm. The chain is Probable transcriptional regulatory protein DP2908 from Desulfotalea psychrophila (strain LSv54 / DSM 12343).